Reading from the N-terminus, the 349-residue chain is UDP-3-O-acylglucosamine N-acyltransferase (349 aa).

The active-site Proton acceptor is the His248.

Belongs to the transferase hexapeptide repeat family. LpxD subfamily. As to quaternary structure, homotrimer.

The catalysed reaction is a UDP-3-O-[(3R)-3-hydroxyacyl]-alpha-D-glucosamine + a (3R)-hydroxyacyl-[ACP] = a UDP-2-N,3-O-bis[(3R)-3-hydroxyacyl]-alpha-D-glucosamine + holo-[ACP] + H(+). The protein operates within bacterial outer membrane biogenesis; LPS lipid A biosynthesis. Functionally, catalyzes the N-acylation of UDP-3-O-acylglucosamine using 3-hydroxyacyl-ACP as the acyl donor. Is involved in the biosynthesis of lipid A, a phosphorylated glycolipid that anchors the lipopolysaccharide to the outer membrane of the cell. The polypeptide is UDP-3-O-acylglucosamine N-acyltransferase (Gloeothece citriformis (strain PCC 7424) (Cyanothece sp. (strain PCC 7424))).